The chain runs to 373 residues: Dual-specificity RNA methyltransferase RlmN (373 aa).

Glutamate 94 functions as the Proton acceptor in the catalytic mechanism. The Radical SAM core domain occupies 100 to 339; the sequence is EADRATLCVS…VIVRKTRGDD (240 aa). Cysteine 107 and cysteine 344 are joined by a disulfide. Positions 114, 118, and 121 each coordinate [4Fe-4S] cluster. S-adenosyl-L-methionine is bound by residues 168-169, serine 200, 222-224, and asparagine 301; these read GE and SLH. The active-site S-methylcysteine intermediate is the cysteine 344.

The protein belongs to the radical SAM superfamily. RlmN family. [4Fe-4S] cluster is required as a cofactor.

The protein resides in the cytoplasm. The enzyme catalyses adenosine(2503) in 23S rRNA + 2 reduced [2Fe-2S]-[ferredoxin] + 2 S-adenosyl-L-methionine = 2-methyladenosine(2503) in 23S rRNA + 5'-deoxyadenosine + L-methionine + 2 oxidized [2Fe-2S]-[ferredoxin] + S-adenosyl-L-homocysteine. The catalysed reaction is adenosine(37) in tRNA + 2 reduced [2Fe-2S]-[ferredoxin] + 2 S-adenosyl-L-methionine = 2-methyladenosine(37) in tRNA + 5'-deoxyadenosine + L-methionine + 2 oxidized [2Fe-2S]-[ferredoxin] + S-adenosyl-L-homocysteine. Its function is as follows. Specifically methylates position 2 of adenine 2503 in 23S rRNA and position 2 of adenine 37 in tRNAs. m2A2503 modification seems to play a crucial role in the proofreading step occurring at the peptidyl transferase center and thus would serve to optimize ribosomal fidelity. The chain is Dual-specificity RNA methyltransferase RlmN from Tolumonas auensis (strain DSM 9187 / NBRC 110442 / TA 4).